Reading from the N-terminus, the 926-residue chain is Alanine--tRNA ligase (926 aa).

His611, His615, Cys714, and His718 together coordinate Zn(2+).

The protein belongs to the class-II aminoacyl-tRNA synthetase family. Requires Zn(2+) as cofactor.

It localises to the cytoplasm. It catalyses the reaction tRNA(Ala) + L-alanine + ATP = L-alanyl-tRNA(Ala) + AMP + diphosphate. Catalyzes the attachment of alanine to tRNA(Ala) in a two-step reaction: alanine is first activated by ATP to form Ala-AMP and then transferred to the acceptor end of tRNA(Ala). Also edits incorrectly charged Ser-tRNA(Ala) and Gly-tRNA(Ala) via its editing domain. The polypeptide is Alanine--tRNA ligase (Methanosarcina mazei (strain ATCC BAA-159 / DSM 3647 / Goe1 / Go1 / JCM 11833 / OCM 88) (Methanosarcina frisia)).